The sequence spans 303 residues: Indole-3-glycerol phosphate synthase (303 aa).

Belongs to the TrpC family.

It carries out the reaction 1-(2-carboxyphenylamino)-1-deoxy-D-ribulose 5-phosphate + H(+) = (1S,2R)-1-C-(indol-3-yl)glycerol 3-phosphate + CO2 + H2O. The protein operates within amino-acid biosynthesis; L-tryptophan biosynthesis; L-tryptophan from chorismate: step 4/5. This is Indole-3-glycerol phosphate synthase from Acaryochloris marina (strain MBIC 11017).